Reading from the N-terminus, the 289-residue chain is Thioredoxin-like protein 1 (289 aa).

In terms of domain architecture, Thioredoxin spans 2–109 (VGVKPVGSDP…EEKIKQHLEN (108 aa)). Cysteine 34 and cysteine 37 are disulfide-bonded. Serine 113 carries the post-translational modification Phosphoserine. One can recognise a PITH domain in the interval 115 to 285 (EDTDIPKGYM…NDFKRVVGKK (171 aa)).

As to quaternary structure, component of the 19S regulatory cap of the 26S proteasome. Interacts with PSMD14/RPN11. Interacts with, and reduces EEF1A1. In terms of tissue distribution, ubiquitous.

It is found in the cytoplasm. Its subcellular location is the nucleus. Its function is as follows. Active thioredoxin with a redox potential of about -250 mV. The polypeptide is Thioredoxin-like protein 1 (TXNL1) (Homo sapiens (Human)).